The following is a 423-amino-acid chain: Putative competence-damage inducible protein (423 aa).

This sequence belongs to the CinA family.

The sequence is that of Putative competence-damage inducible protein from Streptococcus pyogenes serotype M2 (strain MGAS10270).